Consider the following 319-residue polypeptide: ATP-dependent 6-phosphofructokinase (319 aa).

Residue G11 participates in ATP binding. 21–25 (RAVVR) provides a ligand contact to ADP. ATP contacts are provided by residues 72–73 (RC) and 102–105 (GDGS). D103 contacts Mg(2+). Substrate is bound at residue 125–127 (TID). The active-site Proton acceptor is D127. An ADP-binding site is contributed by R154. Substrate-binding positions include R162 and 169–171 (MGR). Residues 185 to 187 (GAE), R211, and 213 to 215 (KKH) contribute to the ADP site. Residues E222, R243, and 249-252 (HVQR) each bind substrate.

Belongs to the phosphofructokinase type A (PFKA) family. ATP-dependent PFK group I subfamily. Prokaryotic clade 'B1' sub-subfamily. Homotetramer. Mg(2+) serves as cofactor.

Its subcellular location is the cytoplasm. It carries out the reaction beta-D-fructose 6-phosphate + ATP = beta-D-fructose 1,6-bisphosphate + ADP + H(+). It functions in the pathway carbohydrate degradation; glycolysis; D-glyceraldehyde 3-phosphate and glycerone phosphate from D-glucose: step 3/4. With respect to regulation, allosterically activated by ADP and other diphosphonucleosides, and allosterically inhibited by phosphoenolpyruvate. Functionally, catalyzes the phosphorylation of D-fructose 6-phosphate to fructose 1,6-bisphosphate by ATP, the first committing step of glycolysis. This is ATP-dependent 6-phosphofructokinase from Bacillus mycoides (strain KBAB4) (Bacillus weihenstephanensis).